The chain runs to 1337 residues: Aldehyde oxidase 4 (1337 aa).

Residues 4–91 (DDLVFAVNGE…GCSITTSDGL (88 aa)) form the 2Fe-2S ferredoxin-type domain. Residues cysteine 43, cysteine 48, cysteine 51, cysteine 73, cysteine 113, cysteine 116, cysteine 155, and cysteine 157 each contribute to the [2Fe-2S] cluster site. Residues 225–409 (LDQTRYHWST…LKVHIPRWIA (185 aa)) form the FAD-binding PCMH-type domain. Residues 259-266 (LVVGNTGT), 342-346 (SIGGN), aspartate 358, and leucine 399 contribute to the FAD site. 3 residues coordinate Mo-molybdopterin: glutamine 771, phenylalanine 802, and arginine 915. Residue glutamate 1265 is the Proton acceptor of the active site.

It belongs to the xanthine dehydrogenase family. As to quaternary structure, aldehyde oxidases (AO) are homodimers and heterodimers of AO subunits. [2Fe-2S] cluster serves as cofactor. The cofactor is FAD. It depends on Mo-molybdopterin as a cofactor. Transcripts expressed at high levels in developing siliques and at low levels in dry seeds.

The protein resides in the cytoplasm. It carries out the reaction indole-3-acetaldehyde + O2 + H2O = (indol-3-yl)acetate + H2O2 + H(+). The catalysed reaction is an aldehyde + O2 + H2O = a carboxylate + H2O2 + H(+). The enzyme catalyses benzaldehyde + O2 + H2O = benzoate + H2O2 + H(+). It catalyses the reaction hexanal + O2 + H2O = hexanoate + H2O2 + H(+). It carries out the reaction 1-naphthaldehyde + O2 + H2O = 1-naphthoate + H2O2 + H(+). The catalysed reaction is vanillin + O2 + H2O = vanillate + H2O2 + H(+). The enzyme catalyses malonaldehyde + O2 + H2O = 3-oxopropanoate + H2O2 + H(+). It catalyses the reaction citral + O2 + H2O = 3,7-dimethylocta-2,6-dienoate + H2O2 + H(+). It carries out the reaction acrolein + O2 + H2O = acrylate + H2O2 + H(+). The catalysed reaction is (E)-4-hydroxynon-2-enal + O2 + H2O = (E)-4-hydroxynon-2-enoate + H2O2 + H(+). The enzyme catalyses (E)-cinnamaldehyde + O2 + H2O = (E)-cinnamate + H2O2 + H(+). It catalyses the reaction indole-3-carbaldehyde + O2 + H2O = indole-3-carboxylate + H2O2 + H(+). It carries out the reaction propanal + O2 + H2O = propanoate + H2O2 + H(+). The catalysed reaction is dodecanal + O2 + H2O = dodecanoate + H2O2 + H(+). The enzyme catalyses salicylaldehyde + O2 + H2O = salicylate + H2O2 + H(+). Its activity is regulated as follows. Inhibited by Cu(2+). Functionally, aldehyde oxidase with a broad substrate specificity. Involved in the accumulation of benzoic acid (BA) in siliques. Delays and protects siliques from senescence by catalyzing aldehyde detoxification in siliques. Catalyzes the oxidation of an array of aromatic and aliphatic aldehydes, including vanillin and the reactive carbonyl species (RCS) acrolein, 4-hydroxyl-2-nonenal (HNE), and malondialdehyde (MDA). This is Aldehyde oxidase 4 from Arabidopsis thaliana (Mouse-ear cress).